The chain runs to 217 residues: Small ribosomal subunit protein eS6 (217 aa).

Belongs to the eukaryotic ribosomal protein eS6 family. In terms of processing, phosphorylated.

This chain is Small ribosomal subunit protein eS6 (RPS6), found in Encephalitozoon cuniculi (strain GB-M1) (Microsporidian parasite).